We begin with the raw amino-acid sequence, 143 residues long: Putative pre-16S rRNA nuclease (143 aa).

Belongs to the YqgF nuclease family.

The protein resides in the cytoplasm. Its function is as follows. Could be a nuclease involved in processing of the 5'-end of pre-16S rRNA. The chain is Putative pre-16S rRNA nuclease from Leuconostoc mesenteroides subsp. mesenteroides (strain ATCC 8293 / DSM 20343 / BCRC 11652 / CCM 1803 / JCM 6124 / NCDO 523 / NBRC 100496 / NCIMB 8023 / NCTC 12954 / NRRL B-1118 / 37Y).